We begin with the raw amino-acid sequence, 359 residues long: Tropomodulin-1 (359 aa).

Residues 36–61 (ELDPDNALLPAGLRQKDQTTKAPTGP) form a disordered region. Residues 39–138 (PDNALLPAGL…CDIAAILGMH (100 aa)) are tropomyosin-binding.

Belongs to the tropomodulin family. As to quaternary structure, binds to the N-terminus of tropomyosin and to actin. Interacts with FLII. Highly expressed in the erythrocyte, heart and skeletal muscle.

It is found in the cytoplasm. It localises to the cytoskeleton. Its function is as follows. Blocks the elongation and depolymerization of the actin filaments at the pointed end. The Tmod/TM complex contributes to the formation of the short actin protofilament, which in turn defines the geometry of the membrane skeleton. May play an important role in regulating the organization of actin filaments by preferentially binding to a specific tropomyosin isoform at its N-terminus. This chain is Tropomodulin-1 (TMOD1), found in Homo sapiens (Human).